A 203-amino-acid polypeptide reads, in one-letter code: Flagellar transcriptional regulator FlhC (203 aa).

Zn(2+)-binding residues include cysteine 161, cysteine 164, cysteine 181, and cysteine 184.

It belongs to the FlhC family. Heterohexamer composed of two FlhC and four FlhD subunits. Each FlhC binds a FlhD dimer, forming a heterotrimer, and a hexamer assembles by dimerization of two heterotrimers. It depends on Zn(2+) as a cofactor.

The protein resides in the cytoplasm. Functions in complex with FlhD as a master transcriptional regulator that regulates transcription of several flagellar and non-flagellar operons by binding to their promoter region. Activates expression of class 2 flagellar genes, including fliA, which is a flagellum-specific sigma factor that turns on the class 3 genes. Also regulates genes whose products function in a variety of physiological pathways. The polypeptide is Flagellar transcriptional regulator FlhC (Cupriavidus necator (strain ATCC 17699 / DSM 428 / KCTC 22496 / NCIMB 10442 / H16 / Stanier 337) (Ralstonia eutropha)).